Reading from the N-terminus, the 77-residue chain is Ras-related C3 botulinum toxin substrate 1 (77 aa).

22 to 24 (KLD) contributes to the GTP binding site. Lys-53 participates in a covalent cross-link: Glycyl lysine isopeptide (Lys-Gly) (interchain with G-Cter in ubiquitin). 65 to 66 (AL) serves as a coordination point for GTP.

Belongs to the small GTPase superfamily. Rho family. In terms of assembly, interacts with NISCH. Interacts with PIP5K1A. Interacts with the GTP-bound form of RAB7A. Interacts with SRGAP2. Interacts with CYFIP1/SRA-1. Interacts with PLXNB3. Interacts with ARHGDIA; the interaction is induced by SEMA5A, mediated through PLXNB3 and inactivates and stabilizes RAC1. Interacts (GTP-bound form preferentially) with PKN2 (via the REM repeats); the interaction stimulates autophosphorylation and phosphorylation of PKN2. Interacts with the GEF proteins PREX1, RASGRF2, FARP1, FARP2, DOCK1, DOCK2 and DOCK7, which promote the exchange between GDP and GTP, and therefore activate it. Interacts with PARD6A, PARD6B and PARD6G in a GTP-dependent manner. Part of a quaternary complex containing PARD3, some PARD6 protein (PARD6A, PARD6B or PARD6G) and some atypical PKC protein (PRKCI or PRKCZ), which plays a central role in epithelial cell polarization. Found in a trimeric complex composed of DOCK1 and ELMO1, which plays a central role in phagocytosis of apoptotic cells. Interacts with RALBP1 via its effector domain. Interacts with PLXNB1. Part of a complex with MAP2K3, MAP3K3, CCM2 and DEF6. Interacts with BAIAP2, BAIAP2L1 and DEF6. Interacts with Y.pseudotuberculosis YPKA and PLCB2. Interacts with NOXA1. Interacts with ARHGEF2. Interacts with TBC1D2. Interacts with UNKL. Interacts with USP6. Interacts with SPATA13. Interacts with ARHGEF16; mediates activation of RAC1 by EPHA2. Interacts with ITGB4. Interacts with S100A8 and calprotectin (S100A8/9). Interacts with PACSIN2. Interacts (when active) with PPP5C (via TPR repeats); activates PPP5C phosphatase activity and translocates PPP5C to the cell membrane. Interacts with RAPH1 (via Ras associating and PH domains). Interacts with MTSS2 (via IMD domain); this interaction may be important to potentiate PDGF-induced RAC1 activation. Interacts with PAK2. Interacts (GTP-bound form) with SH3RF1 and SH3RF3. Found in a complex with SH3RF1, MAPK8IP1/JIP1, MAP3K11/MLK3, MAP2K7/MKK7 and MAPK8/JNK1. Interacts (both active GTP- or inactive GDP-bound forms) with SH3RF2. Interacts (GTP-bound form preferentially) with CYRIB. Interacts with DOCK4 (via DOCKER domain); functions as a guanine nucleotide exchange factor (GEF) for RAC1. Interacts with GARRE1. Interacts with RAP1GDS1. May interact with ARHGAP36. Interacts with DSG3; the interaction is required for DSG3 translocation to cell-cell junctions, organization of cortical F-actin bundles and actin anchoring at cell-cell junctions. Component of the phagocyte NADPH oxidase complex composed of an obligatory core heterodimer formed by the membrane proteins CYBA and CYBB and the cytosolic regulatory subunits NCF1/p47-phox, NCF2/p67-phox, NCF4/p40-phox and the small GTPase RAC1 or RAC2. Interacts with NCF2. In terms of processing, the N-terminus is blocked. Post-translationally, GTP-bound active form is ubiquitinated by HACE1, leading to its degradation by the proteasome.

The protein localises to the cytoplasm. It is found in the membrane. Its subcellular location is the melanosome. It localises to the cell projection. The protein resides in the lamellipodium. The protein localises to the dendrite. It is found in the synapse. Its subcellular location is the nucleus. It catalyses the reaction GTP + H2O = GDP + phosphate + H(+). Its activity is regulated as follows. Regulated by guanine nucleotide exchange factors (GEFs) which promote the exchange of bound GDP for free GTP, GTPase activating proteins (GAPs) which increase the GTP hydrolysis activity, and GDP dissociation inhibitors which inhibit the dissociation of the nucleotide from the GTPase. GTP hydrolysis is stimulated by ARHGAP30. In terms of biological role, plasma membrane-associated small GTPase which cycles between active GTP-bound and inactive GDP-bound states. In its active state, binds to a variety of effector proteins to regulate cellular responses such as secretory processes, phagocytosis of apoptotic cells, epithelial cell polarization, neurons adhesion, migration and differentiation, and growth-factor induced formation of membrane ruffles. Rac1 p21/rho GDI heterodimer is the active component of the cytosolic factor sigma 1, which is involved in stimulation of the NADPH oxidase activity in macrophages. Essential for the SPATA13-mediated regulation of cell migration and adhesion assembly and disassembly. Stimulates PKN2 kinase activity. In concert with RAB7A, plays a role in regulating the formation of RBs (ruffled borders) in osteoclasts. In podocytes, promotes nuclear shuttling of NR3C2; this modulation is required for a proper kidney functioning. Required for atypical chemokine receptor ACKR2-induced LIMK1-PAK1-dependent phosphorylation of cofilin (CFL1) and for up-regulation of ACKR2 from endosomal compartment to cell membrane, increasing its efficiency in chemokine uptake and degradation. In neurons, is involved in dendritic spine formation and synaptic plasticity. In hippocampal neurons, involved in spine morphogenesis and synapse formation, through local activation at synapses by guanine nucleotide exchange factors (GEFs), such as ARHGEF6/ARHGEF7/PIX. In synapses, seems to mediate the regulation of F-actin cluster formation performed by SHANK3. In neurons, plays a crucial role in regulating GABA(A) receptor synaptic stability and hence GABAergic inhibitory synaptic transmission through its role in PAK1 activation and eventually F-actin stabilization. Required for DSG3 translocation to cell-cell junctions, DSG3-mediated organization of cortical F-actin bundles and anchoring of actin at cell junctions; via interaction with DSG3. Subunit of the phagocyte NADPH oxidase complex that mediates the transfer of electrons from cytosolic NADPH to O2 to produce the superoxide anion (O2(-)). This is Ras-related C3 botulinum toxin substrate 1 from Cavia porcellus (Guinea pig).